Reading from the N-terminus, the 228-residue chain is LHFPL tetraspan subfamily member 2 protein (228 aa).

The next 4 membrane-spanning stretches (helical) occupy residues 11–31, 102–122, 132–152, and 181–201; these read MLWT…FMSA, IFLA…VFTM, IFNV…LGLI, and LGWA…CAVF.

The protein belongs to the LHFP family. Expressed in all tissues and cell lines examined except brain and peripheral blood leukocytes.

It localises to the membrane. In terms of biological role, plays a role in female and male fertility. Involved in distal reproductive tract development. The sequence is that of LHFPL tetraspan subfamily member 2 protein from Homo sapiens (Human).